Here is a 313-residue protein sequence, read N- to C-terminus: MNVLEQQLNHLVDECRPYTAQGKVADYIPELAHVKNDLLGVAICLPDGTYIHAGDVHHKFTIQSVSKALTLCYVLMEFGEDYVFSKVGMEPTGDAFNSIAKLEETVPSKPLNPMINAGALAVTSMILGETAELKIYQFRQFLATLLNRSVEEVTYDEKVARSEYETTDLNRALLYFMRHHGIVEGDVDEIIDVYTKQCAIEIDCFDLARIGRVFAGNGEDPDTGEELIPRRVVRIVKAIMTTCGMYDASGEFAVRVGLPGKSGVSGAILAVGNHELDLNNVGFGIFGPALDSKGNSIAGMKLLELLIERYTSR.

Substrate-binding residues include Ser64, Asn116, Glu163, Asn170, Tyr194, Tyr246, and Val264.

It belongs to the glutaminase family. Homotetramer.

It catalyses the reaction L-glutamine + H2O = L-glutamate + NH4(+). The chain is Glutaminase from Exiguobacterium sp. (strain ATCC BAA-1283 / AT1b).